We begin with the raw amino-acid sequence, 548 residues long: T-complex protein 1 subunit theta (548 aa).

Ala2 is modified (N-acetylalanine). ADP-binding residues include Tyr47 and Gly48. Asp99 serves as a coordination point for Mg(2+). 9 residues coordinate ADP: Gly100, Thr101, Asn102, Phe103, Met169, Ser170, Lys171, Gly412, and Asp499. The ATP site is built by Gly100, Thr101, and Asn102. Residues Ser170, Lys171, Gly412, Asp499, and Lys504 each coordinate ATP. Tyr505 carries the post-translational modification Phosphotyrosine. Residues 529–548 form a disordered region; the sequence is PAGGPKPPSGKKDWDEDQND.

In terms of assembly, component of the chaperonin-containing T-complex (TRiC), a hexadecamer composed of two identical back-to-back stacked rings enclosing a protein folding chamber. Each ring is made up of eight different subunits: TCP1/CCT1, CCT2, CCT3, CCT4, CCT5, CCT6A/CCT6, CCT7, CCT8.

Its subcellular location is the cytoplasm. It localises to the cytoskeleton. The protein localises to the microtubule organizing center. It is found in the centrosome. The protein resides in the cilium basal body. It carries out the reaction ATP + H2O = ADP + phosphate + H(+). Its function is as follows. Component of the chaperonin-containing T-complex (TRiC), a molecular chaperone complex that assists the folding of actin, tubulin and other proteins upon ATP hydrolysis. The protein is T-complex protein 1 subunit theta of Gallus gallus (Chicken).